The following is a 1169-amino-acid chain: Transcription-repair-coupling factor (1169 aa).

The 162-residue stretch at 634–795 (DMERARPMDR…MLGVRDLSVI (162 aa)) folds into the Helicase ATP-binding domain. An ATP-binding site is contributed by 647 to 654 (GDVGYGKT). The DEEQ box signature appears at 748–751 (DEEQ). A Helicase C-terminal domain is found at 809-970 (VLEQNTNFIK…GFKIAMRDLN (162 aa)).

This sequence in the N-terminal section; belongs to the UvrB family. The protein in the C-terminal section; belongs to the helicase family. RecG subfamily.

It is found in the cytoplasm. In terms of biological role, couples transcription and DNA repair by recognizing RNA polymerase (RNAP) stalled at DNA lesions. Mediates ATP-dependent release of RNAP and its truncated transcript from the DNA, and recruitment of nucleotide excision repair machinery to the damaged site. This chain is Transcription-repair-coupling factor, found in Staphylococcus epidermidis (strain ATCC 12228 / FDA PCI 1200).